A 146-amino-acid polypeptide reads, in one-letter code: Putative serine protease inhibitor SAV_2156 (146 aa).

The N-terminal stretch at 1-26 (MTKTTMAVPGALLAAIALLSAAPAQA) is a signal peptide. Cystine bridges form between Cys57/Cys70 and Cys90/Cys120.

The protein belongs to the protease inhibitor I16 (SSI) family.

It is found in the secreted. The protein is Putative serine protease inhibitor SAV_2156 of Streptomyces avermitilis (strain ATCC 31267 / DSM 46492 / JCM 5070 / NBRC 14893 / NCIMB 12804 / NRRL 8165 / MA-4680).